Consider the following 223-residue polypeptide: Killer cell lectin-like receptor subfamily B member 1A (223 aa).

The Cytoplasmic portion of the chain corresponds to 1–43; it reads MDTARVYLSLKPSKTAAGAQCVSPPSLPPDACRCPRSHRLALK. Positions 32–35 match the LCK-binding motif motif; it reads CRCP. The helical; Signal-anchor for type II membrane protein transmembrane segment at 44 to 63 threads the bilayer; it reads LSCAGLILLVLALVGMSILV. Residues 64–223 are Extracellular-facing; the sequence is RVLVQKPSVE…LKCECMCNDS (160 aa). In terms of domain architecture, C-type lectin spans 93–212; sequence KCPKDWLSHR…DSDNIWVCQK (120 aa). 3 disulfides stabilise this stretch: Cys-94/Cys-105, Cys-122/Cys-210, and Cys-189/Cys-202.

As to quaternary structure, homodimer; disulfide-linked. Interacts with tyrosine kinase LCK. In terms of tissue distribution, expressed in natural killer cells.

It is found in the membrane. Its function is as follows. Plays a stimulatory role on natural killer (NK) cell cytotoxicity. The polypeptide is Killer cell lectin-like receptor subfamily B member 1A (Klrb1a) (Rattus norvegicus (Rat)).